A 393-amino-acid polypeptide reads, in one-letter code: Riboflavin biosynthesis protein RibBA (393 aa).

The interval 1 to 200 is DHBP synthase; it reads MQFDNIDSAL…IDDLIEYRKK (200 aa). D-ribulose 5-phosphate-binding positions include 27 to 28, aspartate 32, 139 to 143, and glutamate 163; these read RE and RNGHT. Glutamate 28 is a Mg(2+) binding site. Histidine 142 contacts Mg(2+). Residues 201-393 form a GTP cyclohydrolase II region; the sequence is LEPEIEFKAK…TKKIKMGHLI (193 aa). 249–253 contributes to the GTP binding site; the sequence is RLHSA. The Zn(2+) site is built by cysteine 254, cysteine 265, and cysteine 267. GTP-binding positions include glutamine 270, 291 to 293, and threonine 313; that span reads EGR. Aspartate 325 serves as the catalytic Proton acceptor; for GTP cyclohydrolase activity. Catalysis depends on arginine 327, which acts as the Nucleophile; for GTP cyclohydrolase activity. 2 residues coordinate GTP: serine 348 and lysine 353.

In the N-terminal section; belongs to the DHBP synthase family. It in the C-terminal section; belongs to the GTP cyclohydrolase II family. It depends on Mg(2+) as a cofactor. The cofactor is Mn(2+). Zn(2+) serves as cofactor.

The enzyme catalyses D-ribulose 5-phosphate = (2S)-2-hydroxy-3-oxobutyl phosphate + formate + H(+). The catalysed reaction is GTP + 4 H2O = 2,5-diamino-6-hydroxy-4-(5-phosphoribosylamino)-pyrimidine + formate + 2 phosphate + 3 H(+). It functions in the pathway cofactor biosynthesis; riboflavin biosynthesis; 2-hydroxy-3-oxobutyl phosphate from D-ribulose 5-phosphate: step 1/1. It participates in cofactor biosynthesis; riboflavin biosynthesis; 5-amino-6-(D-ribitylamino)uracil from GTP: step 1/4. Catalyzes the conversion of D-ribulose 5-phosphate to formate and 3,4-dihydroxy-2-butanone 4-phosphate. Its function is as follows. Catalyzes the conversion of GTP to 2,5-diamino-6-ribosylamino-4(3H)-pyrimidinone 5'-phosphate (DARP), formate and pyrophosphate. This chain is Riboflavin biosynthesis protein RibBA, found in Staphylococcus aureus (strain COL).